Reading from the N-terminus, the 297-residue chain is HTH-type transcriptional regulator ArgP (297 aa).

The 57-residue stretch at 4 to 60 (PDYRTLQALDAVIRERGFERAAQKLCITQSAVSQRIKQLENMFGQPLLVRTVPPRPT) folds into the HTH lysR-type domain. The H-T-H motif DNA-binding region spans 21-40 (FERAAQKLCITQSAVSQRIK).

This sequence belongs to the LysR transcriptional regulatory family. As to quaternary structure, homodimer.

Controls the transcription of genes involved in arginine and lysine metabolism. This Salmonella arizonae (strain ATCC BAA-731 / CDC346-86 / RSK2980) protein is HTH-type transcriptional regulator ArgP.